The sequence spans 304 residues: Homoserine kinase (304 aa).

An ATP-binding site is contributed by 86–96; the sequence is PLARGLGSSAA.

This sequence belongs to the GHMP kinase family. Homoserine kinase subfamily.

It localises to the cytoplasm. The enzyme catalyses L-homoserine + ATP = O-phospho-L-homoserine + ADP + H(+). The protein operates within amino-acid biosynthesis; L-threonine biosynthesis; L-threonine from L-aspartate: step 4/5. Its function is as follows. Catalyzes the ATP-dependent phosphorylation of L-homoserine to L-homoserine phosphate. In Carboxydothermus hydrogenoformans (strain ATCC BAA-161 / DSM 6008 / Z-2901), this protein is Homoserine kinase.